We begin with the raw amino-acid sequence, 361 residues long: Phosphoserine aminotransferase (361 aa).

Arginine 42 contacts L-glutamate. Residues 76-77 (AS), tryptophan 102, threonine 152, aspartate 172, and glutamine 195 contribute to the pyridoxal 5'-phosphate site. Lysine 196 is modified (N6-(pyridoxal phosphate)lysine). 237–238 (NT) contributes to the pyridoxal 5'-phosphate binding site.

The protein belongs to the class-V pyridoxal-phosphate-dependent aminotransferase family. SerC subfamily. As to quaternary structure, homodimer. The cofactor is pyridoxal 5'-phosphate.

It is found in the cytoplasm. The catalysed reaction is O-phospho-L-serine + 2-oxoglutarate = 3-phosphooxypyruvate + L-glutamate. It catalyses the reaction 4-(phosphooxy)-L-threonine + 2-oxoglutarate = (R)-3-hydroxy-2-oxo-4-phosphooxybutanoate + L-glutamate. Its pathway is amino-acid biosynthesis; L-serine biosynthesis; L-serine from 3-phospho-D-glycerate: step 2/3. In terms of biological role, catalyzes the reversible conversion of 3-phosphohydroxypyruvate to phosphoserine and of 3-hydroxy-2-oxo-4-phosphonooxybutanoate to phosphohydroxythreonine. The protein is Phosphoserine aminotransferase of Halalkalibacterium halodurans (strain ATCC BAA-125 / DSM 18197 / FERM 7344 / JCM 9153 / C-125) (Bacillus halodurans).